The chain runs to 357 residues: UDP-N-acetylglucosamine--N-acetylmuramyl-(pentapeptide) pyrophosphoryl-undecaprenol N-acetylglucosamine transferase (357 aa).

UDP-N-acetyl-alpha-D-glucosamine-binding positions include 15–17 (SGG), Asn-125, Ser-190, and Gln-290.

This sequence belongs to the glycosyltransferase 28 family. MurG subfamily.

The protein localises to the cell inner membrane. It catalyses the reaction di-trans,octa-cis-undecaprenyl diphospho-N-acetyl-alpha-D-muramoyl-L-alanyl-D-glutamyl-meso-2,6-diaminopimeloyl-D-alanyl-D-alanine + UDP-N-acetyl-alpha-D-glucosamine = di-trans,octa-cis-undecaprenyl diphospho-[N-acetyl-alpha-D-glucosaminyl-(1-&gt;4)]-N-acetyl-alpha-D-muramoyl-L-alanyl-D-glutamyl-meso-2,6-diaminopimeloyl-D-alanyl-D-alanine + UDP + H(+). The protein operates within cell wall biogenesis; peptidoglycan biosynthesis. Cell wall formation. Catalyzes the transfer of a GlcNAc subunit on undecaprenyl-pyrophosphoryl-MurNAc-pentapeptide (lipid intermediate I) to form undecaprenyl-pyrophosphoryl-MurNAc-(pentapeptide)GlcNAc (lipid intermediate II). This chain is UDP-N-acetylglucosamine--N-acetylmuramyl-(pentapeptide) pyrophosphoryl-undecaprenol N-acetylglucosamine transferase, found in Chlamydia pneumoniae (Chlamydophila pneumoniae).